The sequence spans 349 residues: Short chain dehydrogenase/reductase dpfgH (349 aa).

Residues 9-31 (LCIRVVDSLYGSFLYLPLAILFL) traverse the membrane as a helical segment. Residues Ile-65, Arg-89, and Asp-115 each coordinate NADP(+). Asn-118 carries an N-linked (GlcNAc...) asparagine glycan. Residues Asn-142 and Lys-164 each contribute to the NADP(+) site. Residues Ser-191 and Ser-192 each act as proton donor in the active site. NADP(+) contacts are provided by Tyr-223 and Lys-227. Tyr-223 functions as the Proton acceptor in the catalytic mechanism. Residue Lys-227 is the Lowers pKa of active site Tyr of the active site. An N-linked (GlcNAc...) asparagine glycan is attached at Asn-334.

It belongs to the short-chain dehydrogenases/reductases (SDR) family.

It is found in the membrane. The protein operates within secondary metabolite biosynthesis; terpenoid biosynthesis. Short chain dehydrogenase/reductase; part of the gene cluster that mediates the biosynthesis of diterpenoid pyrones. The first step of the pathway is the synthesis of the alpha-pyrone moiety by the polyketide synthase dpfgA via condensation of one acetyl-CoA starter unit with 3 malonyl-CoA units and 2 methylations. The alpha-pyrone is then combined with geranylgeranyl pyrophosphate (GGPP) formed by the GGPP synthase dpfgD through the action of the prenyltransferase dpfgC to yield a linear alpha-pyrone diterpenoid. Subsequent steps in the diterpenoid pyrone biosynthetic pathway involve the decalin core formation, which is initiated by the epoxidation of the C10-C11 olefin by the FAD-dependent oxidoreductase dpfgE, and is followed by a cyclization cascade catalyzed by the terpene cyclase dpfgB. The short chain dehydrogenase/reductase dpfgG then oxidizes the 8S hydroxy group to a ketone and the short chain dehydrogenase/reductase dpfgH reduces the ketone to the 8R hydroxy group to yield higginsianin B. Higginsianin B is further methylated by the methyltransferase dpfgI to produce the intermediate named FDDP B. The cytochrome P450 monooxygenase dfgpJ then catalyzes a three-step oxidation at C-27 to generate a carboxylic acid as well as C-26 hydroxylation. Finally, methyltransferase dpfgK methylates the carboxylic acid generated by dpfgJ, yielding the final diterpenoid pyrones from the pathway which were named FDDP D and FDDP E. This Gibberella zeae (strain ATCC MYA-4620 / CBS 123657 / FGSC 9075 / NRRL 31084 / PH-1) (Wheat head blight fungus) protein is Short chain dehydrogenase/reductase dpfgH.